We begin with the raw amino-acid sequence, 406 residues long: CRISP/Allergen/PR-1 (406 aa).

The signal sequence occupies residues 1–18 (MHFQVILMMMWLWLEAEG). An N-linked (GlcNAc...) asparagine glycan is attached at Asn-39. The SCP domain maps to 58–205 (LREHNKLRSR…TFKDLYTCNY (148 aa)).

This sequence belongs to the CRISP family. In terms of processing, contains 9 disulfide bonds. As to expression, expressed by the venom gland.

Its subcellular location is the secreted. This is CRISP/Allergen/PR-1 from Trittame loki (Brush-footed trapdoor spider).